The primary structure comprises 306 residues: tRNA-cytidine(32) 2-sulfurtransferase (306 aa).

A PP-loop motif motif is present at residues 44–49 (SGGKDS). Residues cysteine 119, cysteine 122, and cysteine 210 each contribute to the [4Fe-4S] cluster site.

Belongs to the TtcA family. In terms of assembly, homodimer. The cofactor is Mg(2+). It depends on [4Fe-4S] cluster as a cofactor.

The protein resides in the cytoplasm. The catalysed reaction is cytidine(32) in tRNA + S-sulfanyl-L-cysteinyl-[cysteine desulfurase] + AH2 + ATP = 2-thiocytidine(32) in tRNA + L-cysteinyl-[cysteine desulfurase] + A + AMP + diphosphate + H(+). It participates in tRNA modification. Its function is as follows. Catalyzes the ATP-dependent 2-thiolation of cytidine in position 32 of tRNA, to form 2-thiocytidine (s(2)C32). The sulfur atoms are provided by the cysteine/cysteine desulfurase (IscS) system. The sequence is that of tRNA-cytidine(32) 2-sulfurtransferase from Photorhabdus laumondii subsp. laumondii (strain DSM 15139 / CIP 105565 / TT01) (Photorhabdus luminescens subsp. laumondii).